The primary structure comprises 156 residues: V-type proton ATPase 16 kDa proteolipid subunit c (156 aa).

Residues 1–7 (MAENPIY) lie on the Lumenal side of the membrane. Residues 8 to 30 (GPFFGVMGAASAIIFSALGAAYG) traverse the membrane as a helical segment. Residues 31–52 (TAKSGTGIAAMSVMRPELIMKS) are Cytoplasmic-facing. Residues 53–73 (IIPVVMAGIIAIYGLVVAVLI) traverse the membrane as a helical segment. The Lumenal segment spans residues 74 to 92 (AGSLDSPSNNYTLYRGFIH). A helical membrane pass occupies residues 93 to 114 (LGAGLAVGFSGLAAGFAIGIVG). At 115–126 (DAGVRGTAQQPR) the chain is on the cytoplasmic side. A helical transmembrane segment spans residues 127–152 (LFVGMILILIFAEVLGLYGLIVAIYL). The Lumenal portion of the chain corresponds to 153-156 (YTKQ).

This sequence belongs to the V-ATPase proteolipid subunit family. In terms of assembly, V-ATPase is a heteromultimeric enzyme made up of two complexes: the ATP-hydrolytic V1 complex and the proton translocation V0 complex. The V1 complex consists of three catalytic AB heterodimers that form a heterohexamer, three peripheral stalks each consisting of EG heterodimers, one central rotor including subunits D and F, and the regulatory subunits C and H. The proton translocation complex V0 consists of the proton transport subunit a, a ring of proteolipid subunits c9c'', rotary subunit d, subunits e and f, and the accessory subunits VhaAC45 and ATP6AP2.

The protein localises to the membrane. Proton-conducting pore forming subunit of the V0 complex of vacuolar(H+)-ATPase (V-ATPase), a multisubunit enzyme composed of a peripheral complex (V1) that hydrolyzes ATP and a membrane integral complex (V0) that translocates protons. V-ATPase is responsible for acidifying and maintaining the pH of intracellular compartments and in some cell types, is targeted to the plasma membrane, where it is responsible for acidifying the extracellular environment. The protein is V-type proton ATPase 16 kDa proteolipid subunit c (VHA16) of Manduca sexta (Tobacco hawkmoth).